Consider the following 100-residue polypeptide: Elevenin-Vc1 (100 aa).

The N-terminal stretch at 1–24 is a signal peptide; it reads MAPSQKALLVLVLSMLLTASDSWA. A disulfide bridge connects residues Cys-29 and Cys-38. Residues 44–100 constitute a propeptide that is removed on maturation; the sequence is KRGGDSLSVGGSAELDDALTDPFLRSEEPREWRELTRLSRVLQTFLSHPTGETEQHD.

It belongs to the elevenin family. Monomer. In terms of tissue distribution, expressed by the venom duct.

It localises to the secreted. May mimic the function of prey elevenin neuropeptide. In vivo, intracranial injection in mice induces hyperactivity (tested at 5 and 10 nM). This chain is Elevenin-Vc1, found in Conus victoriae (Queen Victoria cone).